Reading from the N-terminus, the 187-residue chain is Small ribosomal subunit protein uS4 (187 aa).

The S4 RNA-binding domain maps to 105–174 (RRLQTLVFRK…DNHPERAKIV (70 aa)).

Belongs to the universal ribosomal protein uS4 family. Part of the 30S ribosomal subunit. Contacts protein S5. The interaction surface between S4 and S5 is involved in control of translational fidelity.

In terms of biological role, one of the primary rRNA binding proteins, it binds directly to 16S rRNA where it nucleates assembly of the body of the 30S subunit. With S5 and S12 plays an important role in translational accuracy. This is Small ribosomal subunit protein uS4 from Methanocaldococcus jannaschii (strain ATCC 43067 / DSM 2661 / JAL-1 / JCM 10045 / NBRC 100440) (Methanococcus jannaschii).